Consider the following 184-residue polypeptide: MINDLKKDSEQRMQKTLESLEQGFAKVRTGRAHPSILNGVMVPYYGSDVPLNQVANVGIEDSRTLVVQPFERTMVSAIDKAIRESDLGLNPITADSIRVPLPALTEETRRDMQKVARSEAENAKVAIRNIRRDVLGDLKSLLKDKEISEDDERRAGDDIQKITDKYVAEVDKRLAAKEAELMKV.

It belongs to the RRF family.

Its subcellular location is the cytoplasm. Functionally, responsible for the release of ribosomes from messenger RNA at the termination of protein biosynthesis. May increase the efficiency of translation by recycling ribosomes from one round of translation to another. The polypeptide is Ribosome-recycling factor (Acinetobacter baylyi (strain ATCC 33305 / BD413 / ADP1)).